A 329-amino-acid chain; its full sequence is Mitochondrial substrate carrier family protein Q (329 aa).

3 Solcar repeats span residues 18–115, 125–206, and 216–310; these read VEAL…LKSI, LGTI…LRAL, and LGGL…VVIH. 6 helical membrane passes run 21 to 41, 95 to 115, 131 to 151, 175 to 195, 221 to 241, and 298 to 318; these read LGHA…TYPF, LIGI…LKSI, LAIA…IWVV, GFGG…NPSV, VFIL…PYLL, and AFMF…LFYL.

This sequence belongs to the mitochondrial carrier (TC 2.A.29) family.

The protein resides in the peroxisome membrane. May have transport activity. This chain is Mitochondrial substrate carrier family protein Q (mcfQ), found in Dictyostelium discoideum (Social amoeba).